The chain runs to 530 residues: Na(+)/H(+) antiporter NhaB (530 aa).

12 helical membrane passes run 13–33 (FLGK…VINP), 34–54 (LVFF…EFIF), 90–110 (LVAN…IYFM), 121–141 (ILIG…TAAF), 145–165 (FLDA…FYAI), 205–225 (LLIH…VGEP), 241–261 (FIIR…LTCI), 306–326 (GLIA…VGLI), 327–347 (GLSV…HSMG), 351–371 (EEAL…AVII), 455–475 (GQAA…QLSY), and 481–501 (MALP…IFFL).

The protein belongs to the NhaB Na(+)/H(+) (TC 2.A.34) antiporter family.

Its subcellular location is the cell inner membrane. The catalysed reaction is 2 Na(+)(in) + 3 H(+)(out) = 2 Na(+)(out) + 3 H(+)(in). Functionally, na(+)/H(+) antiporter that extrudes sodium in exchange for external protons. The protein is Na(+)/H(+) antiporter NhaB of Aliivibrio fischeri (strain MJ11) (Vibrio fischeri).